A 228-amino-acid polypeptide reads, in one-letter code: L-ribulose-5-phosphate 4-epimerase UlaF (228 aa).

Residues 26–27, 43–44, and 72–73 each bind substrate; these read GN, SG, and SS. D74, H93, and H95 together coordinate Zn(2+). The active-site Proton donor/acceptor is D118. H167 provides a ligand contact to Zn(2+). Residue Y225 is the Proton donor/acceptor of the active site.

The protein belongs to the aldolase class II family. AraD/FucA subfamily. Requires Zn(2+) as cofactor.

It catalyses the reaction L-ribulose 5-phosphate = D-xylulose 5-phosphate. It participates in cofactor degradation; L-ascorbate degradation; D-xylulose 5-phosphate from L-ascorbate: step 4/4. Catalyzes the isomerization of L-ribulose 5-phosphate to D-xylulose 5-phosphate. Is involved in the anaerobic L-ascorbate utilization. The sequence is that of L-ribulose-5-phosphate 4-epimerase UlaF from Shigella flexneri.